Reading from the N-terminus, the 79-residue chain is RNA-binding protein Hfq (79 aa).

The Sm domain occupies 10–69; sequence GPFLNALRKEHVPVSIYLVNGIKLQGNIESFDQYVVLLRNTVTQMVYKHAISTVVPARAV.

This sequence belongs to the Hfq family. As to quaternary structure, homohexamer.

Functionally, RNA chaperone that binds small regulatory RNA (sRNAs) and mRNAs to facilitate mRNA translational regulation in response to envelope stress, environmental stress and changes in metabolite concentrations. Also binds with high specificity to tRNAs. The sequence is that of RNA-binding protein Hfq from Cupriavidus necator (strain ATCC 17699 / DSM 428 / KCTC 22496 / NCIMB 10442 / H16 / Stanier 337) (Ralstonia eutropha).